Here is a 395-residue protein sequence, read N- to C-terminus: Major capsid protein P3 (395 aa).

As to quaternary structure, homotrimer.

The protein localises to the virion. Functionally, major capsid protein self-assembles to form an icosahedral capsid with a pseudo T=25 symmetry, about 66 nm in diameter, and consisting of 240 capsid proteins trimers. The capsid encapsulates an inner membrane and the genomic dsDNA genome. The major coat protein P3 and two assembly factors (P10 and P17) are needed during the assembly of the virus particle inside the host cell, when the capsid protein multimers are capable of enclosing the host-derived membrane, containing the virus-encoded membrane-associated proteins. This is Major capsid protein P3 (III) from Acinetobacter calcoaceticus (Arthrobacter siderocapsulatus).